The sequence spans 284 residues: Putative ABC transporter ATP-binding protein MG468.1 homolog (284 aa).

The ABC transporter domain occupies Val-53–Val-284. Gly-89–Thr-96 provides a ligand contact to ATP.

It belongs to the ABC transporter superfamily.

The protein is Putative ABC transporter ATP-binding protein MG468.1 homolog of Mycoplasma pneumoniae (strain ATCC 29342 / M129 / Subtype 1) (Mycoplasmoides pneumoniae).